We begin with the raw amino-acid sequence, 105 residues long: Large ribosomal subunit protein uL24 (105 aa).

Belongs to the universal ribosomal protein uL24 family. In terms of assembly, part of the 50S ribosomal subunit.

In terms of biological role, one of two assembly initiator proteins, it binds directly to the 5'-end of the 23S rRNA, where it nucleates assembly of the 50S subunit. One of the proteins that surrounds the polypeptide exit tunnel on the outside of the subunit. The protein is Large ribosomal subunit protein uL24 of Thioalkalivibrio sulfidiphilus (strain HL-EbGR7).